The chain runs to 374 residues: Pectate lyase 1 (374 aa).

The N-terminal stretch at 1-21 is a signal peptide; it reads MDSPCLVALLVFSFVIGSCFS. 2 cysteine pairs are disulfide-bonded: Cys28-Cys45 and Cys128-Cys147. Asn158 carries an N-linked (GlcNAc...) asparagine glycan. Asp170 is a Ca(2+) binding site. A glycan (N-linked (GlcNAc...) (complex) asparagine) is linked at Asn191. Asp194 and Asp198 together coordinate Ca(2+). Arg250 is an active-site residue. Asn293 carries N-linked (GlcNAc...) asparagine glycosylation. Cysteines 306 and 312 form a disulfide. The N-linked (GlcNAc...) (complex) asparagine glycan is linked to Asn354.

The protein belongs to the polysaccharide lyase 1 family. Amb a subfamily. It depends on Ca(2+) as a cofactor. N-glycosylated; contains fucose and xylose.

It catalyses the reaction Eliminative cleavage of (1-&gt;4)-alpha-D-galacturonan to give oligosaccharides with 4-deoxy-alpha-D-galact-4-enuronosyl groups at their non-reducing ends.. Its pathway is glycan metabolism; pectin degradation; 2-dehydro-3-deoxy-D-gluconate from pectin: step 2/5. Has pectate lyase activity. This is Pectate lyase 1 from Cryptomeria japonica (Japanese cedar).